The primary structure comprises 411 residues: Thyroxine-binding globulin (411 aa).

A signal peptide spans 1 to 15 (MPLFSLVLLILGLHC). Residues Asn34, Asn97, Asn163, and Asn251 are each glycosylated (N-linked (GlcNAc...) asparagine). Thyroxine contacts are provided by Asn291 and Lys394.

It belongs to the serpin family. As to expression, expressed by the liver and secreted in plasma.

Its subcellular location is the secreted. In terms of biological role, major thyroid hormone transport protein in serum. The chain is Thyroxine-binding globulin (SERPINA7) from Bos taurus (Bovine).